The following is a 226-amino-acid chain: MKMADFVNDGINVDEIVIENQENPNIFINPFKSNPHNVTLSSFRDARIYDLQIRDRPDKYGSGWEVQRSYARKRYGRWMRTVRKNPGFENFRRQPIEVLQTVEDEFGNVYVIRKKINFRAKLPQNMVRRNDGGKNRVNFTAQSVQKGINVDDQDFRPKMFTPKMGREISALRNKLGLTQTDLGKRINVDANVIRNIETGDLVAFNVQDPMVRSLAYALGIRTIKYQ.

The HTH cro/C1-type domain maps to Ile168–Gln226. The segment at residues Gln179–Thr198 is a DNA-binding region (H-T-H motif).

This is an uncharacterized protein from Acanthamoeba polyphaga mimivirus (APMV).